The primary structure comprises 386 residues: Succinate--CoA ligase [ADP-forming] subunit beta (386 aa).

Positions 9 to 244 constitute an ATP-grasp domain; that stretch reads KEILRKYGVP…HDEEDPLETR (236 aa). ATP is bound by residues lysine 46, 53–55, glutamate 99, cysteine 102, and glutamate 107; that span reads GRG. Residues asparagine 199 and aspartate 213 each contribute to the Mg(2+) site. Substrate contacts are provided by residues asparagine 264 and 321–323; that span reads GIM.

Belongs to the succinate/malate CoA ligase beta subunit family. Heterotetramer of two alpha and two beta subunits. Mg(2+) is required as a cofactor.

The enzyme catalyses succinate + ATP + CoA = succinyl-CoA + ADP + phosphate. It carries out the reaction GTP + succinate + CoA = succinyl-CoA + GDP + phosphate. It participates in carbohydrate metabolism; tricarboxylic acid cycle; succinate from succinyl-CoA (ligase route): step 1/1. Functionally, succinyl-CoA synthetase functions in the citric acid cycle (TCA), coupling the hydrolysis of succinyl-CoA to the synthesis of either ATP or GTP and thus represents the only step of substrate-level phosphorylation in the TCA. The beta subunit provides nucleotide specificity of the enzyme and binds the substrate succinate, while the binding sites for coenzyme A and phosphate are found in the alpha subunit. This Rickettsia felis (strain ATCC VR-1525 / URRWXCal2) (Rickettsia azadi) protein is Succinate--CoA ligase [ADP-forming] subunit beta.